Consider the following 340-residue polypeptide: UDP-3-O-(3-hydroxymyristoyl)glucosamine N-acyltransferase (340 aa).

The Proton acceptor role is filled by His239.

The protein belongs to the transferase hexapeptide repeat family. LpxD subfamily. As to quaternary structure, homotrimer.

The catalysed reaction is a UDP-3-O-[(3R)-3-hydroxyacyl]-alpha-D-glucosamine + a (3R)-hydroxyacyl-[ACP] = a UDP-2-N,3-O-bis[(3R)-3-hydroxyacyl]-alpha-D-glucosamine + holo-[ACP] + H(+). It catalyses the reaction UDP-3-O-[(3R)-3-hydroxytetradecanoyl]-alpha-D-glucosamine + (3R)-hydroxytetradecanoyl-[ACP] = UDP-2-N,3-O-bis[(3R)-3-hydroxytetradecanoyl]-alpha-D-glucosamine + holo-[ACP] + H(+). It participates in glycolipid biosynthesis; lipid IV(A) biosynthesis; lipid IV(A) from (3R)-3-hydroxytetradecanoyl-[acyl-carrier-protein] and UDP-N-acetyl-alpha-D-glucosamine: step 3/6. Catalyzes the N-acylation of UDP-3-O-(hydroxytetradecanoyl)glucosamine using 3-hydroxytetradecanoyl-ACP as the acyl donor. Is involved in the biosynthesis of lipid A, a phosphorylated glycolipid that anchors the lipopolysaccharide to the outer membrane of the cell. The protein is UDP-3-O-(3-hydroxymyristoyl)glucosamine N-acyltransferase of Yersinia pestis bv. Antiqua (strain Antiqua).